Here is a 404-residue protein sequence, read N- to C-terminus: Cysteine desulfurase IscS (404 aa).

Residues 75-76, Asn155, Gln183, and 203-205 each bind pyridoxal 5'-phosphate; these read AT and SGH. Lys206 carries the post-translational modification N6-(pyridoxal phosphate)lysine. Residue Thr243 participates in pyridoxal 5'-phosphate binding. The active-site Cysteine persulfide intermediate is Cys328. Cys328 provides a ligand contact to [2Fe-2S] cluster.

This sequence belongs to the class-V pyridoxal-phosphate-dependent aminotransferase family. NifS/IscS subfamily. As to quaternary structure, homodimer. Forms a heterotetramer with IscU, interacts with other sulfur acceptors. It depends on pyridoxal 5'-phosphate as a cofactor.

It is found in the cytoplasm. The enzyme catalyses (sulfur carrier)-H + L-cysteine = (sulfur carrier)-SH + L-alanine. Its pathway is cofactor biosynthesis; iron-sulfur cluster biosynthesis. Master enzyme that delivers sulfur to a number of partners involved in Fe-S cluster assembly, tRNA modification or cofactor biosynthesis. Catalyzes the removal of elemental sulfur atoms from cysteine to produce alanine. Functions as a sulfur delivery protein for Fe-S cluster synthesis onto IscU, an Fe-S scaffold assembly protein, as well as other S acceptor proteins. This is Cysteine desulfurase IscS from Shewanella baltica (strain OS155 / ATCC BAA-1091).